The primary structure comprises 559 residues: Glycerol kinase (559 aa).

Thr20 provides a ligand contact to ADP. ATP contacts are provided by Thr20, Ser21, and Ser22. Thr20 lines the sn-glycerol 3-phosphate pocket. Residue Arg24 participates in ADP binding. Sn-glycerol 3-phosphate is bound by residues Arg94, Glu95, and Tyr148. 3 residues coordinate glycerol: Arg94, Glu95, and Tyr148. Gly252 serves as a coordination point for beta-D-fructose 1,6-bisphosphate. Asp265 provides a ligand contact to sn-glycerol 3-phosphate. The glycerol site is built by Asp265 and Gln266. Residues Thr287, Gly332, Gly433, and Asn437 each coordinate ADP. Thr287, Gly332, and Gly433 together coordinate ATP. Residues 532 to 552 (IFCSLPLGFFIVSSMVMLIGA) form a helical membrane-spanning segment.

This sequence belongs to the FGGY kinase family. In terms of tissue distribution, widely expressed in fetal and adult tissues. As to expression, the sole isoform expressed in adult liver and kidney.

The protein localises to the mitochondrion outer membrane. It localises to the nucleus. The protein resides in the cytoplasm. Its subcellular location is the cytosol. It catalyses the reaction glycerol + ATP = sn-glycerol 3-phosphate + ADP + H(+). It functions in the pathway polyol metabolism; glycerol degradation via glycerol kinase pathway; sn-glycerol 3-phosphate from glycerol: step 1/1. Its activity is regulated as follows. Potassium and magnesium-dependent. Kinase that plays a key role in glycerol metabolism, catalyzing its phosphorylation to produce sn-glycerol 3-phosphate. Sn-glycerol 3-phosphate is a crucial intermediate in various metabolic pathways, such as the synthesis of glycerolipids and triglycerides, glycogenesis, glycolysis and gluconeogenesis. In Homo sapiens (Human), this protein is Glycerol kinase.